Here is a 111-residue protein sequence, read N- to C-terminus: Guanylate cyclase activator 2B (111 aa).

An N-terminal signal peptide occupies residues 1 to 26; the sequence is MGSRTLLGHLSVLAVVLLLLLQGTQS. A propeptide spanning residues 27-96 is cleaved from the precursor; the sequence is VDIKYQGYQV…SILQALRTMD (70 aa). 3 cysteine pairs are disulfide-bonded: C67–C80, C100–C108, and C103–C111.

The protein belongs to the guanylin family.

The protein resides in the secreted. Its function is as follows. Endogenous activator of intestinal guanylate cyclase. It stimulates this enzyme through the same receptor binding region as the heat-stable enterotoxins. May be a potent physiological regulator of intestinal fluid and electrolyte transport. May be an autocrine/paracrine regulator of intestinal salt and water transport. This is Guanylate cyclase activator 2B (GUCA2B) from Cavia porcellus (Guinea pig).